The sequence spans 661 residues: Hemocyanin C chain (661 aa).

Cysteines 3 and 557 form a disulfide. Cu cation-binding residues include His200, His204, His230, His350, His354, and His390. The N-linked (GlcNAc...) asparagine glycan is linked to Asn476.

It belongs to the tyrosinase family. Hemocyanin subfamily. As to quaternary structure, hexamer of a number of different chains, of which A, B, and C have been identified. Hemolymph.

The protein resides in the secreted. The protein localises to the extracellular space. In terms of biological role, hemocyanins are copper-containing oxygen carriers occurring freely dissolved in the hemolymph of many mollusks and arthropods. The sequence is that of Hemocyanin C chain from Panulirus interruptus (California spiny lobster).